The primary structure comprises 527 residues: Probable guanine deaminase (527 aa).

Residues His-79 and His-81 each coordinate Zn(2+). Residues 81–84 (HAPQ), 212–213 (RF), 239–242 (HISE), and Asp-329 contribute to the substrate site. His-239 and Asp-329 together coordinate Zn(2+).

Belongs to the metallo-dependent hydrolases superfamily. ATZ/TRZ family. Requires Zn(2+) as cofactor.

It catalyses the reaction guanine + H2O + H(+) = xanthine + NH4(+). It participates in purine metabolism; guanine degradation; xanthine from guanine: step 1/1. Functionally, catalyzes the hydrolytic deamination of guanine, producing xanthine and ammonia. The chain is Probable guanine deaminase from Schizosaccharomyces pombe (strain 972 / ATCC 24843) (Fission yeast).